The primary structure comprises 87 residues: Small ribosomal subunit protein uS15 (87 aa).

The protein belongs to the universal ribosomal protein uS15 family. As to quaternary structure, part of the 30S ribosomal subunit. Forms a bridge to the 50S subunit in the 70S ribosome, contacting the 23S rRNA.

In terms of biological role, one of the primary rRNA binding proteins, it binds directly to 16S rRNA where it helps nucleate assembly of the platform of the 30S subunit by binding and bridging several RNA helices of the 16S rRNA. Forms an intersubunit bridge (bridge B4) with the 23S rRNA of the 50S subunit in the ribosome. The sequence is that of Small ribosomal subunit protein uS15 from Pseudothermotoga lettingae (strain ATCC BAA-301 / DSM 14385 / NBRC 107922 / TMO) (Thermotoga lettingae).